Consider the following 256-residue polypeptide: Probable ribosomal RNA small subunit methyltransferase A (256 aa).

Residues histidine 8, leucine 10, glycine 34, glutamate 55, aspartate 83, and asparagine 98 each coordinate S-adenosyl-L-methionine.

It belongs to the class I-like SAM-binding methyltransferase superfamily. rRNA adenine N(6)-methyltransferase family. RsmA subfamily.

The protein localises to the cytoplasm. Its function is as follows. Specifically dimethylates two adjacent adenosines in the loop of a conserved hairpin near the 3'-end of 16S rRNA in the 30S particle. May play a critical role in biogenesis of 30S subunits. The sequence is that of Probable ribosomal RNA small subunit methyltransferase A from Methanospirillum hungatei JF-1 (strain ATCC 27890 / DSM 864 / NBRC 100397 / JF-1).